The chain runs to 89 residues: Small ribosomal subunit protein uS19 (89 aa).

It belongs to the universal ribosomal protein uS19 family.

Functionally, protein S19 forms a complex with S13 that binds strongly to the 16S ribosomal RNA. In Azobacteroides pseudotrichonymphae genomovar. CFP2, this protein is Small ribosomal subunit protein uS19.